The primary structure comprises 146 residues: ATP synthase epsilon chain (146 aa).

This sequence belongs to the ATPase epsilon chain family. In terms of assembly, F-type ATPases have 2 components, CF(1) - the catalytic core - and CF(0) - the membrane proton channel. CF(1) has five subunits: alpha(3), beta(3), gamma(1), delta(1), epsilon(1). CF(0) has three main subunits: a, b and c.

It is found in the cell membrane. Produces ATP from ADP in the presence of a proton gradient across the membrane. The protein is ATP synthase epsilon chain of Lactobacillus delbrueckii subsp. bulgaricus (strain ATCC 11842 / DSM 20081 / BCRC 10696 / JCM 1002 / NBRC 13953 / NCIMB 11778 / NCTC 12712 / WDCM 00102 / Lb 14).